The primary structure comprises 230 residues: MPQMAPVMTIDGPSGAGKGTLCQLLAEKLGWHLLDSGAIYRVLALAALHHDVELDAEAALVPLAANLDVQFQVDAEQVKVVLEGEDVSRTIRTEEVGNAASKIAAFPRVREALLRRQRAFRQAPGLIADGRDMGTVVFPEAEVKIFLDASAEERAARRYKQLQDKGFDVNFERLLTEIRERDDRDRNRAVAPLKPAEDALVVDSTAMSIDEVLVTVLAYAEQQLGDVSTN.

12–20 provides a ligand contact to ATP; that stretch reads GPSGAGKGT.

It belongs to the cytidylate kinase family. Type 1 subfamily.

Its subcellular location is the cytoplasm. It carries out the reaction CMP + ATP = CDP + ADP. The enzyme catalyses dCMP + ATP = dCDP + ADP. The polypeptide is Cytidylate kinase (Aeromonas hydrophila subsp. hydrophila (strain ATCC 7966 / DSM 30187 / BCRC 13018 / CCUG 14551 / JCM 1027 / KCTC 2358 / NCIMB 9240 / NCTC 8049)).